The sequence spans 394 residues: Potassium channel subfamily K member 18 (394 aa).

The Cytoplasmic portion of the chain corresponds to 1–31 (MEAEEPPEARRCCPEALGKARGCCPEALGKL). A helical transmembrane segment spans residues 32–52 (LPGLCFLCCLVTYALVGAALF). N-linked (GlcNAc...) asparagine glycosylation occurs at Asn-83. Positions 114–140 (FLSALFFCCTVFSTVGYGHMYPVTRLG) form an intramembrane region, pore-forming. Residues Thr-127, Val-128, Gly-129, and Tyr-130 each coordinate K(+). Residues 127–132 (TVGYGH) form a selectivity filter 1 region. A helical transmembrane segment spans residues 142–162 (FLCMLYALFGIPLMFLVLTDI). Residues 163–292 (GDILATILSR…EVGQQVERLD (130 aa)) are Cytoplasmic-facing. The segment at 210 to 215 (PQIVID) is interaction with calcineurin. The segment at 261-266 (RSNSCP) is interaction with YWHAH. Residues Ser-264 and Ser-276 each carry the phosphoserine modification. The helical transmembrane segment at 293–313 (IPLPVIALVVFAYISCAAAIL) threads the bilayer. Residues 326 to 340 (FYFCFVTLTTIGFGD) constitute an intramembrane region (pore-forming). Residues 335–340 (TIGFGD) are selectivity filter 2. The chain crosses the membrane as a helical span at residues 347-367 (HFFLFFSIYIIVGMEILFIAF). Topologically, residues 368 to 394 (KLMQNRLLHTYKTLMLFVCQREVSLPW) are cytoplasmic.

Belongs to the two pore domain potassium channel (TC 1.A.1.8) family. In terms of assembly, homodimer. Heterodimer with KCNK2. Heterodimer with KCNK10. Interacts with calcineurin. Interacts with YWHAH, in a phosphorylation-dependent manner. In terms of processing, phosphorylation of Ser-264 is required for the binding of 14-3-3eta/YWHAH. Calcineurin-mediated dephosphorylation of Ser-276 enhances channel activity. N-glycosylated. In terms of tissue distribution, detected in brain cortex, cerebellum, dorsal root ganglion, spinal cord and testis. High expression in trigeminal ganglion (at protein level), also expressed in autonomic nervous system ganglia such as the stellate ganglion and paravertebral sympathetic ganglia. Expressed in all adult spinal cord and brain regions, with slightly higher expression in thalamus, hypothalamus, hippocampus and posterior corte (at protein level). In non-neuronal tissues, substantial expression found in lung and heart and weal expression in liver, testis, kidney, small intestine and spleen. Expressed in regulatory T cells (at protein level).

The protein resides in the cell membrane. It carries out the reaction K(+)(in) = K(+)(out). Activated upon cell stimulation via Ca(2+)-mobilizing receptors, such as CHRM1/M1 muscarinic receptor and AGTR1/AT1a angiotensin receptor. Activated by volatile anesthetics, such as isoflurane and inhibited by local anesthetics such as bupivacaine and lidocaine. Inhibited by extracellular acidic pH. Inhibited by Zn(2+) ions. Inhibited by hydroxy-alpha-sanshool, an ingredient of Schezuan pepper. Inhibited by Ba(2+) ions. In terms of biological role, k(+) channel that conducts outward and inward rectifying currents at depolarized and hyperpolarized membrane potentials, respectively. The outward rectifying currents are voltage-dependent, coupled to K(+) electrochemical gradient across the membrane, whereas the inward currents can be induced in response to activation of Ca(2+)-mobilizing receptors. Homo- and heterodimerizes to form functional channels with distinct regulatory and gating properties. In trigeminal ganglia sensory neurons, the heterodimers of KCNK18/TRESK and KCNK2/TREK-1 or KCNK10/TREK-2 inhibit neuronal firing and neurogenic inflammation by stabilizing the resting membrane potential at K(+) equilibrium potential as well as by regulating the threshold of action potentials and the spike frequency. In thymocytes, conducts K(+) currents upon T cell receptor (TCR) signaling leading to sustained Ca(2+) influx and NF-kappa-B activation, FOXP3 transcription and positive selection of regulatory T cell (Treg) progenitor subsets. Appears to mediate the analgesics effects of hydroxy-alpha-sanshool, a metabolite naturally present in Schezuan pepper and other Xanthoxylum plants. The polypeptide is Potassium channel subfamily K member 18 (Mus musculus (Mouse)).